The primary structure comprises 318 residues: TPR repeat-containing protein MJ0940 (318 aa).

TPR repeat units lie at residues 17-50 (SLTY…NPDF), 84-117 (PVAY…EEKF), 119-151 (TAFF…APNF), 152-185 (IPAY…KEND), 186-219 (TNAI…LNVT), 221-254 (IEVI…RPDD), 255-288 (ASLW…MPHH), and 289-318 (TKAL…ALDR).

The sequence is that of TPR repeat-containing protein MJ0940 from Methanocaldococcus jannaschii (strain ATCC 43067 / DSM 2661 / JAL-1 / JCM 10045 / NBRC 100440) (Methanococcus jannaschii).